We begin with the raw amino-acid sequence, 238 residues long: MVLLLLVAIPLLVHSSRGPAHYEMLGRCRMVCDPHGPRGPGPDGAPASVPPFPPGAKGEVGRRGKAGLRGPPGPPGPRGPPGEPGRPGPPGPPGPGPGGVAPAAGYVPRIAFYAGLRRPHEGYEVLRFDDVVTNVGNAYEAASGKFTCPMPGVYFFAYHVLMRGGDGTSMWADLMKNGQVRASAIAQDADQNYDYASNSVILHLDVGDEVFIKLDGGKVHGGNTNKYSTFSGFIIYPD.

Positions Met1 to Ser15 are cleaved as a signal peptide. The interval Gly36 to Ala101 is disordered. The 44-residue stretch at Pro53 to Gly96 folds into the Collagen-like domain. A compositionally biased stretch (pro residues) spans Pro71–Gly96. In terms of domain architecture, C1q spans Gly105–Asp238.

As to quaternary structure, forms homooligomers, predominantly dimers or trimers. Forms heterooligomers with C1QL1, C1QL2 and C1QL3, when proteins are coexpressed; this interaction does not occur after secretion. Interacts with ADGRB3. Highest expression levels in testis and adipose tissue, lower levels in skeletal muscle and kidney.

The protein resides in the secreted. Functionally, may regulate the number of excitatory synapses that are formed on hippocampus neurons. Has no effect on inhibitory synapses. May inhibit adipocyte differentiation at an early stage of the process. In Homo sapiens (Human), this protein is Complement C1q-like protein 4 (C1QL4).